The primary structure comprises 255 residues: Cytochrome c oxidase subunit 3 (255 aa).

7 helical membrane passes run 12 to 29 (INIINISETLYLFYSTGL), 57 to 77 (LKYLSVGEFFINSLTIFINGI), 91 to 111 (IFGMFIFSEIMVFSTFIWGFF), 126 to 146 (LEAFLQISDVLNAGSILISLI), 155 to 175 (YFEVDYMLERLILIGFIFLSF), 196 to 216 (FNVLTGLHSLHVYVGGIFALM), and 235 to 255 (GMYWHFVEIIWIALTMLLFLL).

The protein belongs to the cytochrome c oxidase subunit 3 family. In terms of assembly, component of the cytochrome c oxidase (complex IV, CIV), a multisubunit enzyme composed of a catalytic core of 3 subunits and several supernumerary subunits. The complex exists as a monomer or a dimer and forms supercomplexes (SCs) in the inner mitochondrial membrane with ubiquinol-cytochrome c oxidoreductase (cytochrome b-c1 complex, complex III, CIII).

Its subcellular location is the mitochondrion inner membrane. The catalysed reaction is 4 Fe(II)-[cytochrome c] + O2 + 8 H(+)(in) = 4 Fe(III)-[cytochrome c] + 2 H2O + 4 H(+)(out). In terms of biological role, component of the cytochrome c oxidase, the last enzyme in the mitochondrial electron transport chain which drives oxidative phosphorylation. The respiratory chain contains 3 multisubunit complexes succinate dehydrogenase (complex II, CII), ubiquinol-cytochrome c oxidoreductase (cytochrome b-c1 complex, complex III, CIII) and cytochrome c oxidase (complex IV, CIV), that cooperate to transfer electrons derived from NADH and succinate to molecular oxygen, creating an electrochemical gradient over the inner membrane that drives transmembrane transport and the ATP synthase. Cytochrome c oxidase is the component of the respiratory chain that catalyzes the reduction of oxygen to water. Electrons originating from reduced cytochrome c in the intermembrane space (IMS) are transferred via the dinuclear copper A center (CU(A)) of subunit 2 and heme A of subunit 1 to the active site in subunit 1, a binuclear center (BNC) formed by heme A3 and copper B (CU(B)). The BNC reduces molecular oxygen to 2 water molecules using 4 electrons from cytochrome c in the IMS and 4 protons from the mitochondrial matrix. This chain is Cytochrome c oxidase subunit 3 (MT-CO3), found in Theileria annulata.